An 833-amino-acid chain; its full sequence is MTFYNHKEIEPKWQAFWADNHTFKTGTDASKPKFYALDMFPYPSGAGLHVGHPEGYTATDILSRFKRAQGHNVLHPMGWDAFGLPAEQYAMDTGNDPAEFTAENIANFKRQINALGFSYDWDREVNTTDPNYYKWTQWIFTKLYEKGLAYEAEVPVNWVEELGTAIANEEVLPDGTSERGGYPVVRKPMRQWMLKITAYAERLLEDLEEVDWPESIKDMQRNWIGKSTGANVTFKVKDTDKDFTVFTTRPDTLFGATYAVLAPEHALVDAITTADQAEAVAEYKRQASLKSDLARTDLAKEKTGVWTGAYAINPVNGKEIPVWIADYVLASYGTGAIMAVPAHDERDWEFAKQFNLDIIPVLEGGNVEEAAFTEDGLHINSDFLDGLDKAAAIAKMVEWLEAEGVGNEKVTYRLRDWLFSRQRYWGEPIPIIHWEDGTSTAVPESELPLVLPVTKDIRPSGTGESPLANLTDWLEVTREDGVKGRRETNTMPQWAGSSWYYLRYIDPHNTEKLADEELLKQWLPVDIYVGGAEHAVLHLLYARFWHKVLYDLGVVPTKEPFQKLFNQGMILGTSYRDSRGALVATDKVEKRDGSFFHVETGEELEQAPAKMSKSLKNVVNPDDVVEQYGADTLRVYEMFMGPLDASIAWSEEGLEGSRKFLDRVYRLITTKEITEENSGALDKVYNETVKAVTEQVDQMKFNTAIAQLMVFVNAANKEDKLFSDYAKGFVQLIAPFAPHLGEELWQVLTASGQSISYVPWPSYDESKLVENEIEIVVQIKGKVKAKLVVAKDLSREELQDLALANEKVQAEIAGKDIIKVIAVPNKLVNIVVK.

The 'HIGH' region motif lies at 41-52 (PYPSGAGLHVGH). The 'KMSKS' region motif lies at 610-614 (KMSKS). Lys613 contacts ATP.

Belongs to the class-I aminoacyl-tRNA synthetase family.

The protein resides in the cytoplasm. The catalysed reaction is tRNA(Leu) + L-leucine + ATP = L-leucyl-tRNA(Leu) + AMP + diphosphate. The sequence is that of Leucine--tRNA ligase from Streptococcus agalactiae serotype III (strain NEM316).